A 343-amino-acid polypeptide reads, in one-letter code: WAT1-related protein At1g43650 (343 aa).

The next 10 membrane-spanning stretches (helical) occupy residues 9-29 (MAMVFVQIVYAGMPLLSKVAI), 36-56 (FVFVFYRQAFAALALSPFAFF), 65-85 (LSFILLLKIFFISLCGLTLSL), 98-118 (TFAAATTNAIPSITFVLALLF), 130-150 (GVAKVTGSMVGMLGALVFAFV), 175-195 (SVKGSITMLAANTCWCLWIIM), 209-229 (LVALQCLFSCIQSAVWAVAVN), 239-259 (FGLPLLSMAYCGIMVTGLTYW), 272-292 (FTALYTPLALILTCIVSSFLF), and 296-316 (FYLGSVGGAVLLVCGLYLGLW). 2 consecutive EamA domains span residues 16–139 (IVYA…GSMV) and 188–313 (CWCL…GLYL).

This sequence belongs to the drug/metabolite transporter (DMT) superfamily. Plant drug/metabolite exporter (P-DME) (TC 2.A.7.4) family.

The protein resides in the membrane. The polypeptide is WAT1-related protein At1g43650 (Arabidopsis thaliana (Mouse-ear cress)).